The primary structure comprises 128 residues: NHP2-like protein 1 (128 aa).

N-acetylmethionine is present on methionine 1. The residue at position 2 (threonine 2) is an N-acetylthreonine; in NHP2-like protein 1, N-terminally processed. Residue lysine 21 is modified to N6-acetyllysine. The segment at 36–48 (RKGANEATKTLNR) is interaction with U4 snRNA and U4atac snRNA. Residues 96–128 (SRPVIACSVTIKEGSQLKQQIQSIQQSIERLLV) form an important for U4 snRNA-binding region. At serine 122 the chain carries Phosphoserine.

Belongs to the eukaryotic ribosomal protein eL8 family. As to quaternary structure, identified in the spliceosome B complex. Component of the U4/U6-U5 tri-snRNP complex composed of the U4, U6 and U5 snRNAs and at least PRPF3, PRPF4, PRPF6, PRPF8, PRPF31, SNRNP200, TXNL4A, WDR57, SNRNP40, DDX23, CD2BP2, PPIH, NHP2L1, EFTUD2, SART1 and USP39. Interacts with RAD17 and PRPF31. The complex formed by SNU13 and PRPF31 binds U4 snRNA. The complex formed by SNU13 and PRPF31 also binds U4atac snRNA, a characteristic component of specific, less abundant spliceosomal complexes. Part of the small subunit (SSU) processome, composed of more than 70 proteins and the RNA chaperone small nucleolar RNA (snoRNA) U3. Core component of box C/D small nucleolar ribonucleoprotein (snoRNP) particles; the core proteins SNU13, NOP56, NOP58 and FBL or FBLL1 assemble stepwise onto the snoRNA.

It is found in the nucleus. The protein resides in the nucleolus. In terms of biological role, part of the small subunit (SSU) processome, first precursor of the small eukaryotic ribosomal subunit. During the assembly of the SSU processome in the nucleolus, many ribosome biogenesis factors, an RNA chaperone and ribosomal proteins associate with the nascent pre-rRNA and work in concert to generate RNA folding, modifications, rearrangements and cleavage as well as targeted degradation of pre-ribosomal RNA by the RNA exosome. Involved in pre-mRNA splicing as component of the spliceosome. Binds to the 5'-stem-loop of U4 snRNA and thereby contributes to spliceosome assembly. The protein undergoes a conformational change upon RNA-binding. Core component of box C/D small nucleolar ribonucleoprotein (snoRNP) complexes that function in methylation of multiple sites on ribosomal RNAs (rRNAs) and messenger RNAs (mRNAs). This Bos taurus (Bovine) protein is NHP2-like protein 1.